We begin with the raw amino-acid sequence, 236 residues long: Baculoviral IAP repeat-containing protein 8 (236 aa).

A BIR repeat occupies 7–70 (RLITFGTWMY…KWYPGCKYLL (64 aa)). Residues cysteine 39, cysteine 42, histidine 59, and cysteine 66 each coordinate Zn(2+). The segment at 189–224 (CKICMDRHIAVVFIPCGHLVTCKQCAEAVDRCPMCS) adopts an RING-type zinc-finger fold.

Belongs to the IAP family. As to quaternary structure, binds to caspase-9.

The protein resides in the cytoplasm. Its function is as follows. Protects against apoptosis mediated by BAX. In Pan troglodytes (Chimpanzee), this protein is Baculoviral IAP repeat-containing protein 8 (BIRC8).